Consider the following 234-residue polypeptide: Small ribosomal subunit protein eS4 (234 aa).

Positions 38–99 constitute an S4 RNA-binding; degenerate domain; it reads IPLLIALRDY…GNDYLVSYDR (62 aa).

It belongs to the eukaryotic ribosomal protein eS4 family.

The protein is Small ribosomal subunit protein eS4 (rps4e) of Picrophilus torridus (strain ATCC 700027 / DSM 9790 / JCM 10055 / NBRC 100828 / KAW 2/3).